The following is a 356-amino-acid chain: Putative zinc finger protein At1g68190 (356 aa).

8 residues coordinate Zn(2+): Cys-14, Cys-17, Cys-37, His-42, Cys-57, Cys-60, Cys-80, and His-85. The segment at Cys-14–Leu-56 adopts a B box-type 1; atypical zinc-finger fold. The segment at Cys-57 to Leu-97 adopts a B box-type 2; atypical zinc-finger fold. Residues Glu-159–Lys-178 form a disordered region.

Belongs to the CONSTANS family.

Its subcellular location is the nucleus. The sequence is that of Putative zinc finger protein At1g68190 from Arabidopsis thaliana (Mouse-ear cress).